We begin with the raw amino-acid sequence, 2117 residues long: Tudor domain-containing 6 (2117 aa).

5 Tudor domains span residues 62–118 (DGNP…FFYL), 291–350 (AENL…FFRM), 527–584 (KPVV…FQQL), 757–816 (EPLL…FLKM), and 974–1030 (PQTF…AGDI). The interval 1125-1216 (ASACKKESST…SSKPEVVKPK (92 aa)) is disordered. Basic and acidic residues predominate over residues 1127 to 1152 (ACKKESSTGPKRDAIDQVPKSRESHA). Composition is skewed to polar residues over residues 1153 to 1174 (IQRS…STNG) and 1181 to 1209 (DSGT…TSSK). Tudor domains lie at 1282–1340 (DIHE…FASF) and 1485–1543 (CMPV…LSDV).

Interacts (via Tudor domain) with buc (when dimethylated on arginine residues); and may be responsible for recruitment of different protein complexes to germ plasm.

It is found in the cytoplasm. Functionally, tudor domain-containing protein involved in germ cell development, more specifically the formation of chromatoid body (during spermiogenesis), Balbiani body (during oogenesis), germ plasm (upon fertilization), and for proper miRNA expression and spliceosome maturation. Required for Balbiani body and germ plasm formation and mobility through interaction with dimethylated arginines in the prion-like protein Bucky ball (buc). Coordinates transcript deposition into future primordial germ cells. Interacts with known germ plasm mRNAs such as vasa, dazl, nanos3 and hook2. The protein is Tudor domain-containing 6 of Danio rerio (Zebrafish).